Reading from the N-terminus, the 291-residue chain is UDP-N-acetylenolpyruvoylglucosamine reductase (291 aa).

An FAD-binding PCMH-type domain is found at R22–D187. Residue R166 is part of the active site. Residue C214 is the Proton donor of the active site. E283 is an active-site residue.

It belongs to the MurB family. FAD is required as a cofactor.

It is found in the cytoplasm. The enzyme catalyses UDP-N-acetyl-alpha-D-muramate + NADP(+) = UDP-N-acetyl-3-O-(1-carboxyvinyl)-alpha-D-glucosamine + NADPH + H(+). The protein operates within cell wall biogenesis; peptidoglycan biosynthesis. Functionally, cell wall formation. This is UDP-N-acetylenolpyruvoylglucosamine reductase from Chlamydia trachomatis serovar L2 (strain ATCC VR-902B / DSM 19102 / 434/Bu).